The following is a 459-amino-acid chain: U1 small nuclear ribonucleoprotein 70 kDa (459 aa).

The region spanning 99-178 is the RRM domain; the sequence is KTIFVSRISY…RRIVVDIERG (80 aa). The interval 185–459 is disordered; it reads KPRKFGGGLG…YSMISNENGF (275 aa). Residues 211–241 are compositionally biased toward basic and acidic residues; the sequence is EMSESREKEKEREKEKEKEKERMEKMKKRDG. The segment covering 242 to 254 has biased composition (low complexity); the sequence is GLSSNGNRSNGIS. The segment covering 263 to 408 has biased composition (basic and acidic residues); sequence DRGDRGDRDR…IDERRRDQRD (146 aa). Positions 426-440 are enriched in basic residues; that stretch reads QHHHHQQNHQSHHNQ.

It localises to the nucleus. In terms of biological role, mediates the splicing of pre-mRNA by binding to the stem loop I region of U1-snRNA. This Dictyostelium discoideum (Social amoeba) protein is U1 small nuclear ribonucleoprotein 70 kDa (snrnp70).